Here is a 102-residue protein sequence, read N- to C-terminus: NADH-quinone oxidoreductase subunit K 1 (102 aa).

The next 3 membrane-spanning stretches (helical) occupy residues 5–25, 31–51, and 65–85; these read LSHY…GIFL, IVIL…MVAF, and LFIL…LVVF.

The protein belongs to the complex I subunit 4L family. As to quaternary structure, NDH-1 is composed of 14 different subunits. Subunits NuoA, H, J, K, L, M, N constitute the membrane sector of the complex.

The protein resides in the cell inner membrane. It carries out the reaction a quinone + NADH + 5 H(+)(in) = a quinol + NAD(+) + 4 H(+)(out). NDH-1 shuttles electrons from NADH, via FMN and iron-sulfur (Fe-S) centers, to quinones in the respiratory chain. The immediate electron acceptor for the enzyme in this species is believed to be ubiquinone. Couples the redox reaction to proton translocation (for every two electrons transferred, four hydrogen ions are translocated across the cytoplasmic membrane), and thus conserves the redox energy in a proton gradient. In Rhizobium etli (strain ATCC 51251 / DSM 11541 / JCM 21823 / NBRC 15573 / CFN 42), this protein is NADH-quinone oxidoreductase subunit K 1.